A 216-amino-acid polypeptide reads, in one-letter code: CRIB domain-containing protein RIC7 (216 aa).

The 14-residue stretch at 36–49 (IGNPTDVKHVAHIG) folds into the CRIB domain. A disordered region spans residues 52–216 (GPSDNATAPS…PQFEDDRNGF (165 aa)). A compositionally biased stretch (basic and acidic residues) spans 108-121 (SSSEKGSPTKERSD).

Interacts with ARAC4/ROP2 and ARAC11/ROP1. In terms of tissue distribution, expressed in roots, leaves, guard cells, stems, flowers, siliques and pollen.

It is found in the nucleus. It localises to the cytoplasm. Its subcellular location is the cell membrane. Its function is as follows. Functions as a downstream effector of Rho-related GTP binding proteins of the 'Rho of Plants' (ROPs) family. Participates in the propagation of ROP GTPase signals in specific cellular responses. Functions as a downstream effector of active ARAC4/ROP2 GTPase which is involved in the prevention of excessive stomatal opening upon light stimulation. Is involved in pollen tube growth regulation through its interaction with ARAC11/ROP1. The chain is CRIB domain-containing protein RIC7 (RIC7) from Arabidopsis thaliana (Mouse-ear cress).